An 852-amino-acid chain; its full sequence is MAKEKISPGMQQYLDIKKNYPDAFLLFRMGDFYELFYDDAVKAAQILEISLTSRNKNADNPIPMAGVPYHSAQAYIDVLVEMGYKVAIAEQMEDPKQAVGVVKREVVQVITPGTVVDSSKPDSANNFLVAIDKVGSRFGLSYMDVSTGEFFATELDDFSSVCSEIQNLKAREVVVGYDLLETDEQVLVNQLNLLLSKETEGYDDVHLIGNSLTDLESSVASKLLQYVHRTQMRELSHLQKAQHYEIKDYLQMSYATKSSLDLLENARTGKKHGSLFWLLDKTKTAMGMRLLRTWIDRPLVNQASIIERQNIIQVFLDNFFERSDLTESLKGVYDIERLASRVSFGKANPKDLIQLGHTLAQVPVIKAILESFNDDALSGLLQELDALPELESLIRSAIDPDAPATITEGGIIRDGFDETLDKYRKVMSEGTSWIADIEAKEREASGITTLKIDYNRKDGYYFHVTNSNLSLVPDHFFRKATLKNSERFGTAELAKIEGEMLEAREKSSTLEYDIFMRVREQVERYIDRLQSLAKAIATVDVLQSLAVTAETNHYVRPVFNDEHRIAIDRGRHAVVEKVMGVQEYIPNTITFDSQTNIQLITGPNMSGKSTYMRQLALSVVMAQMGAYVPADSVDLPVFDAIYTRIGAADDLISGQSTFMVEMMEANQAIKRATPNSLIIFDELGRGTATYDGMALAQSIIEFIHDKVGAKTMFATHYHELTALSNSLTHLVNVHVATLEKDGEVTFLHKIVDGPADKSYGIHVAKIAGLPTDLLNRADTILTQLEGETVVIQPQEKVLSQEKPAIETHVNEQISLFDDFTENPVLQELRDLDIYNMTPMQVMMAVADLKQKL.

Position 602 to 609 (602 to 609 (GPNMSGKS)) interacts with ATP.

Belongs to the DNA mismatch repair MutS family.

This protein is involved in the repair of mismatches in DNA. It is possible that it carries out the mismatch recognition step. This protein has a weak ATPase activity. The protein is DNA mismatch repair protein MutS of Streptococcus thermophilus (strain ATCC BAA-250 / LMG 18311).